A 369-amino-acid polypeptide reads, in one-letter code: Spore membrane assembly protein 2 (369 aa).

Residues 1 to 6 (MLFPKR) lie on the Cytoplasmic side of the membrane. A helical membrane pass occupies residues 7–27 (LIVWGVLLILSLSQFVLYLPA). Residues 28–220 (TTCTNSKGLR…NLAFILMMFN (193 aa)) lie on the Lumenal side of the membrane. The helical transmembrane segment at 221–241 (GMVFYFAVLEIIVGFLSICVV) threads the bilayer. Over 242 to 265 (SAFGGALSVGKRHRLFPILLKSSS) the chain is Cytoplasmic. A helical membrane pass occupies residues 266–286 (SILVVIATLTILCNIVYLIAL). The Lumenal portion of the chain corresponds to 287 to 319 (KTLEPEEVTDVGSDNAAVHTTGWELLKVNVGSG). The helical transmembrane segment at 320–340 (FIMGLARYAIQWVLLVLAFLA) threads the bilayer. Over 341 to 369 (ANHYKAKPKKSDKYTEDTSNSPSPDLMEK) the chain is Cytoplasmic. The tract at residues 348-369 (PKKSDKYTEDTSNSPSPDLMEK) is disordered.

It belongs to the SMA2 family.

The protein resides in the prospore membrane. It is found in the endoplasmic reticulum. Involved in spore and ascus formation. Required for the efficient assembly of the precursors of the prospore membrane to a continuous prospore membrane. The sequence is that of Spore membrane assembly protein 2 (SMA2) from Saccharomyces cerevisiae (strain YJM789) (Baker's yeast).